A 666-amino-acid polypeptide reads, in one-letter code: uncharacterized protein (666 aa).

Belongs to the MG032/MG096/MG288 family.

This is an uncharacterized protein from Mycoplasma genitalium (strain ATCC 33530 / DSM 19775 / NCTC 10195 / G37) (Mycoplasmoides genitalium).